Consider the following 407-residue polypeptide: Arginine deiminase (407 aa).

Cysteine 397 functions as the Amidino-cysteine intermediate in the catalytic mechanism.

Belongs to the arginine deiminase family.

It is found in the cytoplasm. The enzyme catalyses L-arginine + H2O = L-citrulline + NH4(+). Its pathway is amino-acid degradation; L-arginine degradation via ADI pathway; carbamoyl phosphate from L-arginine: step 1/2. The sequence is that of Arginine deiminase from Listeria welshimeri serovar 6b (strain ATCC 35897 / DSM 20650 / CCUG 15529 / CIP 8149 / NCTC 11857 / SLCC 5334 / V8).